The chain runs to 68 residues: Large ribosomal subunit protein uL29 (68 aa).

This sequence belongs to the universal ribosomal protein uL29 family.

The protein is Large ribosomal subunit protein uL29 of Wigglesworthia glossinidia brevipalpis.